We begin with the raw amino-acid sequence, 92 residues long: MKFEAVVRTEQGKGASRRLRHAGKFPAIVYGGTEAPVSIALDHDAVINQMDKPAFYEAIELVIDGAAVKVKPQDVQRHAFKPKVEHMDFIRI.

It belongs to the bacterial ribosomal protein bL25 family. As to quaternary structure, part of the 50S ribosomal subunit; part of the 5S rRNA/L5/L18/L25 subcomplex. Contacts the 5S rRNA. Binds to the 5S rRNA independently of L5 and L18.

Its function is as follows. This is one of the proteins that binds to the 5S RNA in the ribosome where it forms part of the central protuberance. This chain is Large ribosomal subunit protein bL25, found in Aliivibrio fischeri (strain ATCC 700601 / ES114) (Vibrio fischeri).